Reading from the N-terminus, the 62-residue chain is Large ribosomal subunit protein uL30 (62 aa).

It belongs to the universal ribosomal protein uL30 family. Part of the 50S ribosomal subunit.

This chain is Large ribosomal subunit protein uL30, found in Alkalilimnicola ehrlichii (strain ATCC BAA-1101 / DSM 17681 / MLHE-1).